A 196-amino-acid chain; its full sequence is Ribosome maturation factor RimP (196 aa).

Positions 164–196 (LAPQKPNKPGPKKTGHEKKKPSNESAAGKPRAE) are disordered. The segment covering 173-182 (GPKKTGHEKK) has biased composition (basic residues).

This sequence belongs to the RimP family.

The protein resides in the cytoplasm. Required for maturation of 30S ribosomal subunits. In Xanthomonas oryzae pv. oryzae (strain MAFF 311018), this protein is Ribosome maturation factor RimP.